We begin with the raw amino-acid sequence, 190 residues long: Segregation and condensation protein B (190 aa).

This sequence belongs to the ScpB family. As to quaternary structure, homodimer. Homodimerization may be required to stabilize the binding of ScpA to the Smc head domains. Component of a cohesin-like complex composed of ScpA, ScpB and the Smc homodimer, in which ScpA and ScpB bind to the head domain of Smc. The presence of the three proteins is required for the association of the complex with DNA.

Its subcellular location is the cytoplasm. Functionally, participates in chromosomal partition during cell division. May act via the formation of a condensin-like complex containing Smc and ScpA that pull DNA away from mid-cell into both cell halves. The sequence is that of Segregation and condensation protein B from Bacillus cereus (strain AH187).